A 388-amino-acid polypeptide reads, in one-letter code: Staphopain A (388 aa).

Positions 1–25 are cleaved as a signal peptide; sequence MKRNFPKLIALSLIFSLSVTPIANA. The propeptide occupies 26–214; sequence ESNSNIKAKD…TSQFKSNNYT (189 aa). Active-site residues include Cys238, His334, and Asn355.

Belongs to the peptidase C47 family. In terms of assembly, in the cytoplasm, prematurely activated/folded ScpA forms a stable non-covalent complex with ScpB. Post-translationally, cleavage leads to the activation of ScpA probably by an auto-catalytic manner.

It localises to the secreted. It carries out the reaction Broad endopeptidase action on proteins including elastin, but rather limited hydrolysis of small-molecule substrates. Assays are conveniently made with hemoglobin, casein or Z-Phe-Arg-NHMec as substrate.. With respect to regulation, prematurely activated/folded staphopain A is inhibited by staphostatin A (ScpB), which is probably required to protect staphylococcal cytoplasmic proteins from degradation by ScpA. In terms of biological role, cysteine protease that plays an important role in the inhibition of host innate immune response. Cleaves host elastins found in connective tissues, pulmonary surfactant protein A in the lungs, and the chemokine receptor CXCR2 on leukocytes. Proteolytic cleavage of surfactant protein A impairs bacterial phagocytosis by neutrophils while CXCR2 degradation blocks neutrophil activation and chemotaxis. Additionally, promotes vascular leakage by activating the plasma kallikerin/kinin system, resulting in hypotension. This chain is Staphopain A (sspP), found in Staphylococcus aureus (strain Mu50 / ATCC 700699).